The primary structure comprises 359 residues: ELAV-like protein 2 (359 aa).

The tract at residues 1-33 is disordered; the sequence is METQLSNGPTCNNTANGPTTINNNCSSPVDSGN. RRM domains follow at residues 39-117 and 125-205; these read TNLI…YARP and ANLY…FANN. S221 bears the Phosphoserine mark. The region spanning 276–354 is the RRM 3 domain; the sequence is WCIFVYNLAP…RVLQVSFKTN (79 aa).

Belongs to the RRM elav family. Interacts with IGF2BP1. Interacts with MAP1B light chain LC1.

Its function is as follows. RNA-binding protein that binds to the 3' untranslated region (3'UTR) of target mRNAs. Seems to recognize a GAAA motif. Can bind to its own 3'UTR, the FOS 3'UTR and the ID 3'UTR. This is ELAV-like protein 2 (ELAVL2) from Pongo abelii (Sumatran orangutan).